We begin with the raw amino-acid sequence, 180 residues long: Large ribosomal subunit protein uL5 (180 aa).

This sequence belongs to the universal ribosomal protein uL5 family. As to quaternary structure, part of the 50S ribosomal subunit; part of the 5S rRNA/L5/L18/L25 subcomplex. Contacts the 5S rRNA and the P site tRNA. Forms a bridge to the 30S subunit in the 70S ribosome.

Functionally, this is one of the proteins that bind and probably mediate the attachment of the 5S RNA into the large ribosomal subunit, where it forms part of the central protuberance. In the 70S ribosome it contacts protein S13 of the 30S subunit (bridge B1b), connecting the 2 subunits; this bridge is implicated in subunit movement. Contacts the P site tRNA; the 5S rRNA and some of its associated proteins might help stabilize positioning of ribosome-bound tRNAs. The sequence is that of Large ribosomal subunit protein uL5 from Anaeromyxobacter sp. (strain Fw109-5).